We begin with the raw amino-acid sequence, 170 residues long: Adenine phosphoribosyltransferase (170 aa).

This sequence belongs to the purine/pyrimidine phosphoribosyltransferase family. As to quaternary structure, homodimer.

It is found in the cytoplasm. The enzyme catalyses AMP + diphosphate = 5-phospho-alpha-D-ribose 1-diphosphate + adenine. It functions in the pathway purine metabolism; AMP biosynthesis via salvage pathway; AMP from adenine: step 1/1. In terms of biological role, catalyzes a salvage reaction resulting in the formation of AMP, that is energically less costly than de novo synthesis. This Geobacillus sp. (strain WCH70) protein is Adenine phosphoribosyltransferase.